A 173-amino-acid polypeptide reads, in one-letter code: NADH-ubiquinone oxidoreductase chain 6 (173 aa).

A run of 5 helical transmembrane segments spans residues 1 to 21 (MTYF…AVAS), 27 to 47 (YGVL…LSLG), 48 to 68 (VSFI…VVFV), 87 to 107 (VVIY…VGDF), and 139 to 159 (WGAG…FVVL).

It belongs to the complex I subunit 6 family.

The protein resides in the mitochondrion membrane. It catalyses the reaction a ubiquinone + NADH + 5 H(+)(in) = a ubiquinol + NAD(+) + 4 H(+)(out). Core subunit of the mitochondrial membrane respiratory chain NADH dehydrogenase (Complex I) that is believed to belong to the minimal assembly required for catalysis. Complex I functions in the transfer of electrons from NADH to the respiratory chain. The immediate electron acceptor for the enzyme is believed to be ubiquinone. This is NADH-ubiquinone oxidoreductase chain 6 (MT-ND6) from Struthio camelus (Common ostrich).